The sequence spans 393 residues: Na(+)/H(+) antiporter NhaA (393 aa).

The next 11 helical transmembrane spans lie at 14–34, 60–80, 96–116, 125–145, 155–175, 179–199, 218–238, 263–283, 292–312, 330–350, and 362–382; these read AAGM…NWSV, LLLW…GLEV, MLPL…FLLF, AGWA…LTLL, VFLL…IALF, QVFW…AYMN, VCIL…GFFI, FLIV…GIVL, LGIA…FSWL, IVAV…ITLL, and YAKL…YLAL.

Belongs to the NhaA Na(+)/H(+) (TC 2.A.33) antiporter family.

The protein resides in the cell inner membrane. The catalysed reaction is Na(+)(in) + 2 H(+)(out) = Na(+)(out) + 2 H(+)(in). Functionally, na(+)/H(+) antiporter that extrudes sodium in exchange for external protons. This is Na(+)/H(+) antiporter NhaA from Pectobacterium atrosepticum (strain SCRI 1043 / ATCC BAA-672) (Erwinia carotovora subsp. atroseptica).